A 348-amino-acid chain; its full sequence is TEGPYFYVPMVNTTGIVRSPYEYPQYYLVNPAAYAVLGAYMFFLIILGFPINFLTLYVTLEHKKLRTPLNYILLNLAVADLFMVIGGFTTTMYSSMHGYFVLGRLGCNLEGFSATLGGMISLWSLAVLAIERWVVVCKPISNFRFGENHAIMGVSLTWTMALACTVPPLVGWSRYIPEGMQCSCGIDYYTRAEGFNNESFVLYMFFCHFMVPLIIIFFCYGRLLCAVKEAAAAQQESETTQRAEREVTRMVILMVIGYLVCWLPYASVAWFIFTHQGSEFGPLFMTIPAFFAKSSSIYNPVIYICMNKQFRNCMITTLFCGKNPFEGEEEGASSTKTEASSASSVSPA.

Residues Thr1 to Ala33 are Extracellular-facing. N-linked (GlcNAc...) asparagine glycosylation occurs at Asn12. Residues Tyr34 to Val58 form a helical membrane-spanning segment. The Cytoplasmic segment spans residues Thr59–Asn70. The chain crosses the membrane as a helical span at residues Tyr71–Tyr93. The Extracellular segment spans residues Ser94 to Cys107. Cys107 and Cys184 are oxidised to a cystine. A helical membrane pass occupies residues Asn108 to Ile130. Residues Glu131–Trp133 carry the 'Ionic lock' involved in activated form stabilization motif. Residues Glu131 to His149 lie on the Cytoplasmic side of the membrane. Residues Ala150–Val170 traverse the membrane as a helical segment. At Gly171 to Ser199 the chain is on the extracellular side. An N-linked (GlcNAc...) asparagine glycan is attached at Asn197. Residues Phe200–Gly221 traverse the membrane as a helical segment. Residues Arg222 to Arg249 are Cytoplasmic-facing. A helical transmembrane segment spans residues Met250–Phe271. Over Ile272 to Leu283 the chain is Extracellular. The helical transmembrane segment at Phe284–Cys305 threads the bilayer. Residue Lys293 is modified to N6-(retinylidene)lysine. Topologically, residues Met306–Ala348 are cytoplasmic. Cys320 is lipidated: S-palmitoyl cysteine. Positions Gly327–Ala348 are disordered. Over residues Ala332 to Ala348 the composition is skewed to low complexity.

This sequence belongs to the G-protein coupled receptor 1 family. Opsin subfamily. In terms of processing, phosphorylated on some or all of the serine and threonine residues present in the C-terminal region. Contains one covalently linked retinal chromophore.

It is found in the membrane. The protein resides in the cell projection. The protein localises to the cilium. It localises to the photoreceptor outer segment. Photoreceptor required for image-forming vision at low light intensity. While most salt water fish species use retinal as chromophore, most freshwater fish use 3-dehydroretinal, or a mixture of retinal and 3-dehydroretinal. Light-induced isomerization of 11-cis to all-trans retinal triggers a conformational change that activates signaling via G-proteins. Subsequent receptor phosphorylation mediates displacement of the bound G-protein alpha subunit by arrestin and terminates signaling. The sequence is that of Rhodopsin (rho) from Neoniphon argenteus (Clearfin squirrelfish).